A 349-amino-acid chain; its full sequence is Ferredoxin--NADP reductase 1 (349 aa).

Glu36, Lys44, Tyr48, Val88, Leu123, Asp290, and Ser331 together coordinate FAD.

It belongs to the ferredoxin--NADP reductase type 2 family. In terms of assembly, homodimer. FAD serves as cofactor.

The enzyme catalyses 2 reduced [2Fe-2S]-[ferredoxin] + NADP(+) + H(+) = 2 oxidized [2Fe-2S]-[ferredoxin] + NADPH. The polypeptide is Ferredoxin--NADP reductase 1 (Bacillus licheniformis (strain ATCC 14580 / DSM 13 / JCM 2505 / CCUG 7422 / NBRC 12200 / NCIMB 9375 / NCTC 10341 / NRRL NRS-1264 / Gibson 46)).